A 64-amino-acid chain; its full sequence is Small ribosomal subunit protein eS17 (64 aa).

This sequence belongs to the eukaryotic ribosomal protein eS17 family.

The chain is Small ribosomal subunit protein eS17 from Methanosarcina mazei (strain ATCC BAA-159 / DSM 3647 / Goe1 / Go1 / JCM 11833 / OCM 88) (Methanosarcina frisia).